Reading from the N-terminus, the 148-residue chain is UPF0179 protein VNG_1401C (148 aa).

Belongs to the UPF0179 family.

The protein is UPF0179 protein VNG_1401C of Halobacterium salinarum (strain ATCC 700922 / JCM 11081 / NRC-1) (Halobacterium halobium).